The primary structure comprises 265 residues: Energy-coupling factor transporter transmembrane protein EcfT (265 aa).

Helical transmembrane passes span 32–52 (MVLL…VFII), 72–92 (LVII…GRVI), 115–135 (LIML…IALT), 150–170 (VPAH…PTLM), and 245–265 (LAAF…RFIW).

It belongs to the energy-coupling factor EcfT family. Forms a stable energy-coupling factor (ECF) transporter complex composed of 2 membrane-embedded substrate-binding proteins (S component), 2 ATP-binding proteins (A component) and 2 transmembrane proteins (T component). May be able to interact with more than 1 S component at a time.

Its subcellular location is the cell membrane. Transmembrane (T) component of an energy-coupling factor (ECF) ABC-transporter complex. Unlike classic ABC transporters this ECF transporter provides the energy necessary to transport a number of different substrates. In Thermosediminibacter oceani (strain ATCC BAA-1034 / DSM 16646 / JW/IW-1228P), this protein is Energy-coupling factor transporter transmembrane protein EcfT.